A 400-amino-acid polypeptide reads, in one-letter code: SEC14-like protein 3 (400 aa).

In terms of domain architecture, CRAL-TRIO spans 76–249; it reads PPEVIQKYMP…QFGGTLTDPD (174 aa). The GOLD domain maps to 275–383; sequence KTQYEHSVQI…AKKVSFTVEV (109 aa).

Probable hydrophobic ligand-binding protein; may play a role in the transport of hydrophobic ligands like tocopherol, squalene and phospholipids. This Homo sapiens (Human) protein is SEC14-like protein 3 (SEC14L3).